Here is a 305-residue protein sequence, read N- to C-terminus: Glycine--tRNA ligase alpha subunit (305 aa).

The protein belongs to the class-II aminoacyl-tRNA synthetase family. As to quaternary structure, tetramer of two alpha and two beta subunits.

The protein resides in the cytoplasm. The enzyme catalyses tRNA(Gly) + glycine + ATP = glycyl-tRNA(Gly) + AMP + diphosphate. In Heliobacterium modesticaldum (strain ATCC 51547 / Ice1), this protein is Glycine--tRNA ligase alpha subunit.